We begin with the raw amino-acid sequence, 1450 residues long: Phospholipase B1, membrane-associated (1450 aa).

Positions 1–27 (MESWPGVSLVGLLLLLLLGQGPSQIHG) are cleaved as a signal peptide. Topologically, residues 28–1422 (SSGENTSQPQ…KAKENSNTLY (1395 aa)) are extracellular. 3 N-linked (GlcNAc...) asparagine glycosylation sites follow: Asn32, Asn45, and Asn179. Repeat copies occupy residues 41–351 (RTLK…YRNS), 366–711 (MKEG…TKNS), and 712–1058 (NLGH…FRNS). The segment at 41–1407 (RTLKNFSFPC…NPFLYTVRNS (1367 aa)) is 4 X 308-326 AA approximate repeats. Active-site residues include Ser404, Asp518, and His659. Asn699 is a glycosylation site (N-linked (GlcNAc...) asparagine). Over residues 708–720 (TKNSNLGHGTSMS) the composition is skewed to polar residues. A disordered region spans residues 708–734 (TKNSNLGHGTSMSCEEKAPSASPPTSV). N-linked (GlcNAc...) asparagine glycosylation is found at Asn787, Asn801, Asn844, Asn880, Asn926, Asn1059, Asn1226, Asn1280, Asn1383, and Asn1387. Copy 4 of the repeat occupies 1068–1407 (IENWGSDFLC…NPFLYTVRNS (340 aa)). A necessary for membrane localization region spans residues 1408-1450 (QILLDKAKENSNTLYWAVPVAAVGGLVVGILGMMLWRTVRLVQ). The chain crosses the membrane as a helical span at residues 1423–1443 (WAVPVAAVGGLVVGILGMMLW). At 1444 to 1450 (RTVRLVQ) the chain is on the cytoplasmic side.

This sequence belongs to the 'GDSL' lipolytic enzyme family. Phospholipase B1 subfamily. In terms of processing, undergoes proteolytic cleavage in the ileum. In terms of tissue distribution, expressed in the ileum mucosa, Paneth cells spermatocytes, spermatids and sperm (at protein level). Expressed in the ileum, jejunum, esophagus and testis.

Its subcellular location is the apical cell membrane. It carries out the reaction a 1,2-diacyl-sn-glycero-3-phosphocholine + H2O = a 1-acyl-sn-glycero-3-phosphocholine + a fatty acid + H(+). The enzyme catalyses a 1-O-alkyl-2-acyl-sn-glycero-3-phosphocholine + H2O = a 1-O-alkyl-sn-glycero-3-phosphocholine + a fatty acid + H(+). The catalysed reaction is a 1-acyl-sn-glycero-3-phosphocholine + H2O = sn-glycerol 3-phosphocholine + a fatty acid + H(+). It catalyses the reaction a triacylglycerol + H2O = a diacylglycerol + a fatty acid + H(+). It carries out the reaction 1,2-dihexadecanoyl-sn-glycero-3-phosphocholine + H2O = 1-hexadecanoyl-sn-glycero-3-phosphocholine + hexadecanoate + H(+). The enzyme catalyses 1-hexadecanoyl-2-(9Z-octadecenoyl)-sn-glycero-3-phosphocholine + H2O = 1-hexadecanoyl-sn-glycero-3-phosphocholine + (9Z)-octadecenoate + H(+). The catalysed reaction is 1,2-di-(9Z-octadecenoyl)-sn-glycero-3-phosphocholine + H2O = 1-(9Z-octadecenoyl)-sn-glycero-3-phosphocholine + (9Z)-octadecenoate + H(+). It catalyses the reaction 1-hexadecanoyl-2-(9Z,12Z-octadecadienoyl)-sn-glycero-3-phosphocholine + H2O = (9Z,12Z)-octadecadienoate + 1-hexadecanoyl-sn-glycero-3-phosphocholine + H(+). It carries out the reaction 1-hexadecanoyl-2-(9Z,12Z-octadecadienoyl)-sn-glycero-3-phosphocholine + H2O = 2-(9Z,12Z-octadecadienoyl)-sn-glycero-3-phosphocholine + hexadecanoate + H(+). The enzyme catalyses 1-hexadecanoyl-2-(9Z-octadecenoyl)-sn-glycero-3-phosphoethanolamine + H2O = 1-hexadecanoyl-sn-glycero-3-phosphoethanolamine + (9Z)-octadecenoate + H(+). The catalysed reaction is 1-hexadecanoyl-2-(9Z-octadecenoyl)-sn-glycero-3-phospho-(1'-sn-glycerol) + H2O = 1-hexadecanoyl-sn-glycero-3-phospho-(1'-sn-glycerol) + (9Z)-octadecenoate + H(+). It catalyses the reaction 1,2-dihexadecanoyl-sn-glycero-3-phosphocholine + 2 H2O = sn-glycerol 3-phosphocholine + 2 hexadecanoate + 2 H(+). It carries out the reaction 1-O-hexadecyl-2-(9Z)-octadecenoyl-sn-glycero-3-phosphocholine + H2O = 1-O-hexadecyl-sn-glycero-3-phosphocholine + (9Z)-octadecenoate + H(+). The enzyme catalyses 1-hexadecanoyl-sn-glycero-3-phosphocholine + H2O = sn-glycerol 3-phosphocholine + hexadecanoate + H(+). The catalysed reaction is 1,2,3-tri-(9Z-octadecenoyl)-glycerol + H2O = di-(9Z)-octadecenoylglycerol + (9Z)-octadecenoate + H(+). It catalyses the reaction 1-hexadecanoyl-2-(9Z)-octadecenoyl-3-octadecanoyl-sn-glycerol + H2O = 1-hexadecanoyl-2-(9Z-octadecenoyl)-sn-glycerol + octadecanoate + H(+). It carries out the reaction 1,3-dihexadecanoyl-2-(9Z-octadecenoyl)glycerol + H2O = 1,3-dihexadecanoylglycerol + (9Z)-octadecenoate + H(+). The enzyme catalyses 1,3-dihexadecanoyl-2-(9Z-octadecenoyl)glycerol + H2O = 1-hexadecanoyl-2-(9Z-octadecenoyl)-glycerol + hexadecanoate + H(+). The catalysed reaction is 1-hexadecanoyl-2-(9Z)-octadecenoyl-3-octadecanoyl-sn-glycerol + H2O = 1-hexadecanoyl-3-octadecanoyl-sn-glycerol + (9Z)-octadecenoate + H(+). It catalyses the reaction 1-hexadecanoyl-2-(9Z)-octadecenoyl-3-octadecanoyl-sn-glycerol + H2O = 2-(9Z-octadecenoyl)-3-octadecanoyl-sn-glycerol + hexadecanoate + H(+). It carries out the reaction 1-octadecanoyl-2-(9Z,12Z)-octadecadienoyl-sn-glycerol + H2O = 1-octadecanoyl-sn-glycerol + (9Z,12Z)-octadecadienoate + H(+). The enzyme catalyses 1,2-di-(9Z-octadecenoyl)-sn-glycerol + H2O = 1-(9Z-octadecenoyl)-sn-glycerol + (9Z)-octadecenoate + H(+). The catalysed reaction is 2,3-di-(9Z)-octadecenoyl-sn-glycerol + H2O = 3-(9Z-octadecenoyl)-sn-glycerol + (9Z)-octadecenoate + H(+). It catalyses the reaction 1,3-di-(9Z-octadecenoyl)-glycerol + H2O = 1-(9Z-octadecenoyl)-glycerol + (9Z)-octadecenoate + H(+). It carries out the reaction 1-(9Z-octadecenoyl)-glycerol + H2O = glycerol + (9Z)-octadecenoate + H(+). The enzyme catalyses 2-(9Z-octadecenoyl)-glycerol + H2O = glycerol + (9Z)-octadecenoate + H(+). Its activity is regulated as follows. Up-regulated by bile acids such as deoxycholate. Inhibited by diisopropyl fluorophosphate. Its function is as follows. Calcium-independent membrane-associated phospholipase that catalyzes complete diacylation of phospholipids by hydrolyzing both sn-1 and sn-2 fatty acyl chains attached to the glycerol backbone (phospholipase B activity). Has dual phospholipase and lysophospholipase activities toward diacylphospholipids. Preferentially cleaves sn-2 ester bonds over sn-1 bonds. Acts as a lipase toward glycerolipid substrates. Hydrolyzes fatty acyl chains of diacylglycerols with preference for the sn-2 position and of triacylglycerols with not positional selectivity. May also hydrolyze long chain retinyl esters such as retinyl palmitate. May contribute to digestion of dietary phospholipids, glycerolipids and retinoids, facilitating lipid absorption at the brush border. This chain is Phospholipase B1, membrane-associated (Plb1), found in Rattus norvegicus (Rat).